The following is a 695-amino-acid chain: U1 snRNP-associated protein usp107 (695 aa).

Residues 85–96 (RDNESQQKDRKN) are compositionally biased toward basic and acidic residues. The interval 85-134 (RDNESQQKDRKNLPRNQKSNEIQEKQTFQTPSSEKSTTERESRPFVPPNS) is disordered. Residues 98-113 (PRNQKSNEIQEKQTFQ) are compositionally biased toward polar residues. Residues 139-221 (RMLFIGNIPK…PSTRLSLITD (83 aa)) enclose the RRM domain. Residues 265 to 369 (DVRSRIERAA…NLLSKHRISR (105 aa)) are a coiled coil. 2 stretches are compositionally biased toward basic and acidic residues: residues 487–506 (EEDA…RTRG) and 548–561 (SERR…RLLL). Disordered regions lie at residues 487–509 (EEDA…GEGA) and 540–590 (QTKK…AEKT). The region spanning 605–695 (ESLWALPIDW…HVLLILRSEA (91 aa)) is the PWI domain.

As to quaternary structure, component of the U1 snRNP particle, a subcomplex of the spliceosome. Interacts with prp5 and usp102.

The protein resides in the cytoplasm. It is found in the nucleus. Functionally, component of the U1 snRNP particle, which recognizes and binds the 5'-splice site of pre-mRNA. Together with other non-snRNP factors, U1 snRNP forms the spliceosomal commitment complex, that targets pre-mRNA to the splicing pathway. This chain is U1 snRNP-associated protein usp107 (usp107), found in Schizosaccharomyces pombe (strain 972 / ATCC 24843) (Fission yeast).